The sequence spans 263 residues: Methylesterase 18 (263 aa).

Serine 80 (acyl-ester intermediate) is an active-site residue. Catalysis depends on charge relay system residues aspartate 212 and histidine 240.

Belongs to the AB hydrolase superfamily. Methylesterase family.

The enzyme catalyses methyl (indol-3-yl)acetate + H2O = (indol-3-yl)acetate + methanol + H(+). The protein operates within plant hormone biosynthesis. Methylesterase shown to have methyl indole-3-acetic acid (MeIAA) esterase activity in vitro. This Arabidopsis thaliana (Mouse-ear cress) protein is Methylesterase 18.